Reading from the N-terminus, the 249-residue chain is MEHSLIILLFTVLLLLTTTPGILSQPSPAVAPAPPGPTNVTKILEKAGQFTVFIRLLKSTGVANQLYGQLNNSDNGITIFAPSDSSFTGLKAGTLNSLTDEQQVELIQFHVIPSYVSSSNFQTISNPLRTQAGDSADGHFPLNVTTSGNTVNITSGVTNTTVSGNVYSDGQLAVYQVDKVLLPQQVFDPRPPAPAPAPSVSKSKKKKDDSDSSSDDSPADASFALRNVGSVCDAVSFCVMSVMLAWFYL.

The first 24 residues, 1–24 (MEHSLIILLFTVLLLLTTTPGILS), serve as a signal peptide directing secretion. Positions 37-181 (PTNVTKILEK…LAVYQVDKVL (145 aa)) constitute an FAS1 domain. 5 N-linked (GlcNAc...) asparagine glycosylation sites follow: N39, N71, N143, N152, and N159. The interval 186 to 219 (VFDPRPPAPAPAPSVSKSKKKKDDSDSSSDDSPA) is disordered. Residue D220 is the site of GPI-anchor amidated aspartate attachment. The propeptide at 221–249 (ASFALRNVGSVCDAVSFCVMSVMLAWFYL) is removed in mature form.

It belongs to the fasciclin-like AGP family.

It localises to the cell membrane. Its function is as follows. May be a cell surface adhesion protein. The sequence is that of Fasciclin-like arabinogalactan protein 12 (FLA12) from Arabidopsis thaliana (Mouse-ear cress).